The following is a 182-amino-acid chain: Alkyl hydroperoxide reductase AhpD (182 aa).

The active-site Proton donor is the Cys132. Cys132 and Cys135 are joined by a disulfide. Cys135 acts as the Cysteine sulfenic acid (-SOH) intermediate in catalysis.

It belongs to the AhpD family.

It catalyses the reaction N(6)-[(R)-dihydrolipoyl]-L-lysyl-[lipoyl-carrier protein] + a hydroperoxide = N(6)-[(R)-lipoyl]-L-lysyl-[lipoyl-carrier protein] + an alcohol + H2O. In terms of biological role, antioxidant protein with alkyl hydroperoxidase activity. Required for the reduction of the AhpC active site cysteine residues and for the regeneration of the AhpC enzyme activity. This chain is Alkyl hydroperoxide reductase AhpD, found in Bradyrhizobium diazoefficiens (strain JCM 10833 / BCRC 13528 / IAM 13628 / NBRC 14792 / USDA 110).